The following is a 233-amino-acid chain: Orotidine 5'-phosphate decarboxylase (233 aa).

Residues Asp10, Lys32, 60–69 (DLKLHDIPAT), Thr115, Arg176, Gln185, Gly205, and Arg206 each bind substrate. The active-site Proton donor is Lys62.

Belongs to the OMP decarboxylase family. Type 1 subfamily. Homodimer.

The catalysed reaction is orotidine 5'-phosphate + H(+) = UMP + CO2. Its pathway is pyrimidine metabolism; UMP biosynthesis via de novo pathway; UMP from orotate: step 2/2. Its function is as follows. Catalyzes the decarboxylation of orotidine 5'-monophosphate (OMP) to uridine 5'-monophosphate (UMP). The sequence is that of Orotidine 5'-phosphate decarboxylase from Thermobifida fusca (strain YX).